The primary structure comprises 166 residues: NADH-ubiquinone oxidoreductase chain 6 (166 aa).

The next 5 membrane-spanning stretches (helical) occupy residues 1-21 (MMYF…AFAS), 26-46 (IYGG…VVSL), 47-67 (GGSF…LVVF), 87-107 (VFTN…YFSG), and 139-159 (CGGW…FVVL).

This sequence belongs to the complex I subunit 6 family. As to quaternary structure, core subunit of respiratory chain NADH dehydrogenase (Complex I) which is composed of 45 different subunits.

The protein resides in the mitochondrion inner membrane. The catalysed reaction is a ubiquinone + NADH + 5 H(+)(in) = a ubiquinol + NAD(+) + 4 H(+)(out). Its function is as follows. Core subunit of the mitochondrial membrane respiratory chain NADH dehydrogenase (Complex I) which catalyzes electron transfer from NADH through the respiratory chain, using ubiquinone as an electron acceptor. Essential for the catalytic activity and assembly of complex I. The sequence is that of NADH-ubiquinone oxidoreductase chain 6 (MT-ND6) from Ornithorhynchus anatinus (Duckbill platypus).